A 143-amino-acid polypeptide reads, in one-letter code: NADH-quinone oxidoreductase subunit A (143 aa).

3 helical membrane-spanning segments follow: residues 8–28 (FGNV…GYLT), 63–83 (FYVV…LYPW), and 90–110 (LGVF…LGLV).

Belongs to the complex I subunit 3 family. In terms of assembly, NDH-1 is composed of 14 different subunits. Subunits NuoA, H, J, K, L, M, N constitute the membrane sector of the complex.

It is found in the cell inner membrane. The enzyme catalyses a quinone + NADH + 5 H(+)(in) = a quinol + NAD(+) + 4 H(+)(out). Its function is as follows. NDH-1 shuttles electrons from NADH, via FMN and iron-sulfur (Fe-S) centers, to quinones in the respiratory chain. The immediate electron acceptor for the enzyme in this species is believed to be a menaquinone. Couples the redox reaction to proton translocation (for every two electrons transferred, four hydrogen ions are translocated across the cytoplasmic membrane), and thus conserves the redox energy in a proton gradient. This Chlorobium phaeobacteroides (strain DSM 266 / SMG 266 / 2430) protein is NADH-quinone oxidoreductase subunit A.